We begin with the raw amino-acid sequence, 116 residues long: Large ribosomal subunit protein uL18 (116 aa).

The protein belongs to the universal ribosomal protein uL18 family. Part of the 50S ribosomal subunit; part of the 5S rRNA/L5/L18/L25 subcomplex. Contacts the 5S and 23S rRNAs.

This is one of the proteins that bind and probably mediate the attachment of the 5S RNA into the large ribosomal subunit, where it forms part of the central protuberance. The polypeptide is Large ribosomal subunit protein uL18 (Pseudomonas fluorescens (strain ATCC BAA-477 / NRRL B-23932 / Pf-5)).